We begin with the raw amino-acid sequence, 290 residues long: Beta carbonic anhydrase 6, mitochondrial (290 aa).

Residues 1–20 (MAFTLGGRARRLVSATSVHQ) constitute a mitochondrion transit peptide. Phosphoserine is present on S122. C226 is subject to S-nitrosocysteine.

The protein belongs to the beta-class carbonic anhydrase family. As to expression, strongly expressed in aerial tissues including leaves, stems, flowers and siliques, and, to a lower extent, in roots. Accumulates in guard cells.

The protein resides in the mitochondrion. The enzyme catalyses hydrogencarbonate + H(+) = CO2 + H2O. In terms of biological role, reversible hydration of carbon dioxide. This is Beta carbonic anhydrase 6, mitochondrial (BCA6) from Arabidopsis thaliana (Mouse-ear cress).